Reading from the N-terminus, the 405-residue chain is Tyrosine--tRNA ligase (405 aa).

Positions 41–50 match the 'HIGH' region motif; the sequence is PTAPDLHLGH. The 'KMSKS' region signature appears at 225 to 229; it reads KMSKS. Lysine 228 lines the ATP pocket. Positions 342-404 constitute an S4 RNA-binding domain; it reads EPLLVWVLSK…GKKGKFLKII (63 aa).

Belongs to the class-I aminoacyl-tRNA synthetase family. TyrS type 2 subfamily. Homodimer.

It is found in the cytoplasm. The catalysed reaction is tRNA(Tyr) + L-tyrosine + ATP = L-tyrosyl-tRNA(Tyr) + AMP + diphosphate + H(+). Functionally, catalyzes the attachment of tyrosine to tRNA(Tyr) in a two-step reaction: tyrosine is first activated by ATP to form Tyr-AMP and then transferred to the acceptor end of tRNA(Tyr). The chain is Tyrosine--tRNA ligase from Leptospira interrogans serogroup Icterohaemorrhagiae serovar Lai (strain 56601).